Reading from the N-terminus, the 920-residue chain is Androgen receptor (920 aa).

The segment at 1–559 is modulating; sequence MEVQLGLGRV…IDYYFPPQKT (559 aa). The interaction with ZNF318 stretch occupies residues 1–587; that stretch reads MEVQLGLGRV…GSCKVFFKRA (587 aa). Disordered regions lie at residues 36–167 and 195–228; these read NPGP…LSLL and QQQQ…YLGG. The span at 44–91 shows a compositional bias: low complexity; it reads AASAAPPGASLLLLQQQQQQQQQQQQQQQQQQQQQQQETSPRQQQQQQ. S83 bears the Phosphoserine; by CDK9 mark. S96 bears the Phosphoserine mark. The segment covering 195 to 217 has biased composition (low complexity); the sequence is QQQQQEAVSEGSSSGRAREASGA. Polar residues predominate over residues 218–228; sequence PTSSKDNYLGG. A Phosphotyrosine; by CSK modification is found at Y225. A Phosphoserine modification is found at S258. Residue Y269 is modified to Phosphotyrosine; by CSK and TNK2. Residues Y309, Y348, Y359, and Y364 each carry the phosphotyrosine; by CSK modification. Y365 is modified (phosphotyrosine; by CSK and TNK2). Residue K388 forms a Glycyl lysine isopeptide (Lys-Gly) (interchain with G-Cter in SUMO) linkage. Y395 bears the Phosphotyrosine; by CSK mark. K521 participates in a covalent cross-link: Glycyl lysine isopeptide (Lys-Gly) (interchain with G-Cter in SUMO). Residues Y535 and Y552 each carry the phosphotyrosine; by CSK modification. Residues 552 to 919 are interaction with LPXN; that stretch reads YYFPPQKTCL…GKVKPIYFHT (368 aa). NR C4-type zinc fingers lie at residues 560 to 580 and 596 to 620; these read CLIC…CGSC and CASR…LRKC. A DNA-binding region (nuclear receptor) is located at residues 560–632; the sequence is CLICGDEASG…AGMTLGARKL (73 aa). An interaction with HIPK3 region spans residues 572–662; that stretch reads YGALTCGSCK…TEETTQKLTV (91 aa). The interaction with CCAR1 stretch occupies residues 592 to 919; it reads QKYLCASRND…GKVKPIYFHT (328 aa). Residues 625–919 form an interaction with KAT7 region; the sequence is MTLGARKLKK…GKVKPIYFHT (295 aa). S651 is subject to Phosphoserine; by STK4/MST1. The region spanning 669-900 is the NR LBD domain; sequence ECQPIFLNVL…DFPEMMAEII (232 aa). 17beta-hydroxy-5alpha-androstan-3-one is bound by residues N706 and R753. Residues K846 and K848 each participate in a glycyl lysine isopeptide (Lys-Gly) (interchain with G-Cter in ubiquitin) cross-link. 17beta-hydroxy-5alpha-androstan-3-one is bound at residue T878. The residue at position 916 (Y916) is a Phosphotyrosine; by CSK.

This sequence belongs to the nuclear hormone receptor family. NR3 subfamily. Binds DNA as a homodimer. Part of a ternary complex containing AR, EFCAB6/DJBP and PARK7. Interacts with HIPK3 and NR0B2 in the presence of androgen. The ligand binding domain interacts with KAT7/HBO1 in the presence of dihydrotestosterone. Interacts with EFCAB6/DJBP, PQBP1, RANBP9, RBAK, SPDEF, SRA1, TGFB1I1 and RREB1. Interacts with ZMIZ1/ZIMP10 and ZMIZ2/ZMIP7 which both enhance its transactivation activity. Interacts with SLC30A9 and RAD54L2/ARIP4. Interacts with MACROD1 (via macro domain). Interacts via the ligand-binding domain with LXXLL and FXXLF motifs from NCOA1, NCOA2, NCOA3 and MAGEA11. Interacts (via nuclear receptor DNA binding domain and nuclear receptor ligand binding domain) with NCOA4. The AR N-terminal poly-Gln region binds Ran resulting in enhancement of AR-mediated transactivation. Ran-binding decreases as the poly-Gln length increases. Interacts with HIP1 (via coiled coil domain). Interacts (via ligand-binding domain) with TRIM68. Interacts with TNK2. Interacts with USP26. Interacts with RNF6. Interacts (regulated by RNF6 probably through polyubiquitination) with RNF14; regulates AR transcriptional activity. Interacts with PRMT2 and TRIM24. Interacts with RACK1. Interacts with RANBP10; this interaction enhances dihydrotestosterone-induced AR transcriptional activity. Interacts with PRPF6 in a hormone-independent way; this interaction enhances dihydrotestosterone-induced AR transcriptional activity. Interacts with STK4/MST1. Interacts with ZIPK/DAPK3. Interacts with LPXN. Interacts with MAK. Part of a complex containing AR, MAK and NCOA3. Interacts with CRY1. Interacts with CCAR1 and GATA2. Interacts with ZNF318. Interacts with BUD31. Interacts with ARID4A. Interacts with ARID4B. Interacts (via NR LBD domain) with ZBTB7A; the interaction is direct and androgen-dependent. Interacts with NCOR1. Interacts with NCOR2. Interacts with CRY2 in a ligand-dependent manner. In terms of processing, sumoylated on Lys-388 (major) and Lys-521. Ubiquitinated. Deubiquitinated by USP26. 'Lys-6' and 'Lys-27'-linked polyubiquitination by RNF6 modulates AR transcriptional activity and specificity. Post-translationally, phosphorylated in prostate cancer cells in response to several growth factors including EGF. Phosphorylation is induced by c-Src kinase (CSK). Tyr-535 is one of the major phosphorylation sites and an increase in phosphorylation and Src kinase activity is associated with prostate cancer progression. Phosphorylation by TNK2 enhances the DNA-binding and transcriptional activity and may be responsible for androgen-independent progression of prostate cancer. Phosphorylation at Ser-83 by CDK9 regulates AR promoter selectivity and cell growth. Phosphorylation by PAK6 leads to AR-mediated transcription inhibition. Palmitoylated by ZDHHC7 and ZDHHC21. Palmitoylation is required for plasma membrane targeting and for rapid intracellular signaling via ERK and AKT kinases and cAMP generation. As to expression, mainly expressed in heart and skeletal muscle. Expressed in basal and stromal cells of the prostate (at protein level).

Its subcellular location is the nucleus. The protein localises to the cytoplasm. Its activity is regulated as follows. AIM-100 (4-amino-5,6-biaryl-furo[2,3-d]pyrimidine) suppresses TNK2-mediated phosphorylation at Tyr-269. Inhibits the binding of the Tyr-269 phosphorylated form to androgen-responsive enhancers (AREs) and its transcriptional activity. Steroid hormone receptors are ligand-activated transcription factors that regulate eukaryotic gene expression and affect cellular proliferation and differentiation in target tissues. Transcription factor activity is modulated by bound coactivator and corepressor proteins like ZBTB7A that recruits NCOR1 and NCOR2 to the androgen response elements/ARE on target genes, negatively regulating androgen receptor signaling and androgen-induced cell proliferation. Transcription activation is also down-regulated by NR0B2. Activated, but not phosphorylated, by HIPK3 and ZIPK/DAPK3. In terms of biological role, lacks the C-terminal ligand-binding domain and may therefore constitutively activate the transcription of a specific set of genes independently of steroid hormones. The polypeptide is Androgen receptor (AR) (Homo sapiens (Human)).